Reading from the N-terminus, the 468-residue chain is Hepatocyte nuclear factor 3-alpha (468 aa).

Positions 169-260 (AKPPYSYISL…GNMFENGCYL (92 aa)) form a DNA-binding region, fork-head. Residues 251 to 288 (GNMFENGCYLRRQKRFKCEKQPGAGGGSGGGGSKGGPE) are essential for DNA binding. The disordered stretch occupies residues 269-396 (EKQPGAGGGS…DPHYSFNHPF (128 aa)). The segment covering 273-285 (GAGGGSGGGGSKG) has biased composition (gly residues). Phosphoserine occurs at positions 303 and 327. Composition is skewed to low complexity over residues 318–328 (GAPAPGPAASP) and 347–365 (SPAS…ALAS).

In terms of assembly, binds DNA as a monomer. Interacts with FOXA2. Interacts with NKX2-1. Interacts with HDAC7. Interacts with the histone H3-H4 heterodimer. Associates with nucleosomes containing histone H2A. Interacts with AR. Interacts with NR0B2. As to expression, restricted mainly to endoderm-derived tissues (lung, liver, stomach, and small intestine). Expressed in the prostate.

It localises to the nucleus. Functionally, transcription factor that is involved in embryonic development, establishment of tissue-specific gene expression and regulation of gene expression in differentiated tissues. Is thought to act as a 'pioneer' factor opening the compacted chromatin for other proteins through interactions with nucleosomal core histones and thereby replacing linker histones at target enhancer and/or promoter sites. Binds DNA with the consensus sequence 5'-[AC]A[AT]T[AG]TT[GT][AG][CT]T[CT]-3'. Proposed to play a role in translating the epigenetic signatures into cell type-specific enhancer-driven transcriptional programs. Involved in the development of multiple endoderm-derived organ systems such as the liver, pancreas, lungs and prostate; FOXA1 and FOXA2 seem to have at least in part redundant roles. Plays a role in prostate morphogenesis and epithelial cell differentiation. FOXA1 and FOXA2 are essential for hepatic specification. FOXA1 and FOXA2 are required for morphogenesis and cell differentiation during formation of the lung. FOXA1 and FOXA2 are involved in bile duct formation; they positively regulate the binding of glucocorticoid receptor/NR3C1 to the IL6 promoter. FOXA1 and FOXA2 regulate multiple phases of midbrain dopaminergic neuron development; they regulate expression of NEUROG2 at the beginning of mDA neurogenesis and of NR4A2 and EN1 in immature mDA neurons. Modulates the transcriptional activity of nuclear hormone receptors. Is involved in ESR1-mediated transcription. Inhibits NKX2-1-mediated transcription from the SFTPC promoter in lung epithel independently from DNA-binding. Involved in regulation of apoptosis. Involved in cell cycle regulation. Originally described as a transcription activator for a number of liver genes such as AFP, albumin, tyrosine aminotransferase, PEPCK, etc. Interacts with the cis-acting regulatory regions of these genes. Involved in glucose homeostasis; activates the GCG promoter. The protein is Hepatocyte nuclear factor 3-alpha (Foxa1) of Mus musculus (Mouse).